We begin with the raw amino-acid sequence, 670 residues long: MDKRFQLVSQFSPAGDQPQAIEQLINGLKSGLAFQTLLGVTGSGKTFTLANAIAKLNRPTLILAPNKTLAAQLYGEMKEFFPNNAVEYFVSYYDYYQPEAYVPSSDSFIEKDAAINAHIEQMRLSATKALLERKDVVLVASVSAIYGLGDPTAYLQMMLHLTVGEIISSREILQRLVDLQYNRNETELSRGTFRVRGEVIDIFPADSEKEALRIELFDDEVEQISVFDPLTGQGIDKLARVTVYPKTHYVTPREQILKAVDAIKVELNERKKEFLEQNKLLEEQRISQRTLYDIEMMNELGYCSGIENYSRYLSGRSEGQAPPTLFDYLPKDALLIIDESHVTVPQIGAMYKGDRSRKENLVNYGFRLPSALDNRPLKFAEFEKIAPQTIYVSATPSDYEINKSQGEIIRQVIRPTGLLDPVIEVRPVTTQVDDLLSEINIRLPLKERVLVTTLTKRMAEDLTDYLHEHGIKARYLHSDVNTVERVEIIRDLRLGIFDVLIGINLLREGLDIPEVSLVAILDADKEGFLRSERSLIQTMGRAARNLNGKAILYAARITGSMQKAIKVTEDRRELQNKFNIENGIIPQGLSKQVNDVMQLGQKNLKKGNLKQGKVAEYKANYQIHSEQDILKQIALSEKQMFACAKNLEFEKAALFRDEVTKLHEQLVSIG.

One can recognise a Helicase ATP-binding domain in the interval 26–183; the sequence is NGLKSGLAFQ…QRLVDLQYNR (158 aa). ATP is bound at residue 39–46; that stretch reads GVTGSGKT. The Beta-hairpin signature appears at 92-115; it reads YYDYYQPEAYVPSSDSFIEKDAAI. A Helicase C-terminal domain is found at 431–597; that stretch reads QVDDLLSEIN…GLSKQVNDVM (167 aa). Residues 630 to 665 form the UVR domain; the sequence is LKQIALSEKQMFACAKNLEFEKAALFRDEVTKLHEQ.

It belongs to the UvrB family. As to quaternary structure, forms a heterotetramer with UvrA during the search for lesions. Interacts with UvrC in an incision complex.

The protein localises to the cytoplasm. The UvrABC repair system catalyzes the recognition and processing of DNA lesions. A damage recognition complex composed of 2 UvrA and 2 UvrB subunits scans DNA for abnormalities. Upon binding of the UvrA(2)B(2) complex to a putative damaged site, the DNA wraps around one UvrB monomer. DNA wrap is dependent on ATP binding by UvrB and probably causes local melting of the DNA helix, facilitating insertion of UvrB beta-hairpin between the DNA strands. Then UvrB probes one DNA strand for the presence of a lesion. If a lesion is found the UvrA subunits dissociate and the UvrB-DNA preincision complex is formed. This complex is subsequently bound by UvrC and the second UvrB is released. If no lesion is found, the DNA wraps around the other UvrB subunit that will check the other stand for damage. This is UvrABC system protein B from Psychromonas ingrahamii (strain DSM 17664 / CCUG 51855 / 37).